A 431-amino-acid chain; its full sequence is Serine hydroxymethyltransferase 2 (431 aa).

Residues Leu131 and 135–137 (GHL) contribute to the (6S)-5,6,7,8-tetrahydrofolate site. Lys240 carries the N6-(pyridoxal phosphate)lysine modification. Residue Glu256 coordinates (6S)-5,6,7,8-tetrahydrofolate.

It belongs to the SHMT family. As to quaternary structure, homodimer. It depends on pyridoxal 5'-phosphate as a cofactor.

It is found in the cytoplasm. The enzyme catalyses (6R)-5,10-methylene-5,6,7,8-tetrahydrofolate + glycine + H2O = (6S)-5,6,7,8-tetrahydrofolate + L-serine. The protein operates within one-carbon metabolism; tetrahydrofolate interconversion. Its pathway is amino-acid biosynthesis; glycine biosynthesis; glycine from L-serine: step 1/1. Its function is as follows. Catalyzes the reversible interconversion of serine and glycine with tetrahydrofolate (THF) serving as the one-carbon carrier. This reaction serves as the major source of one-carbon groups required for the biosynthesis of purines, thymidylate, methionine, and other important biomolecules. Also exhibits THF-independent aldolase activity toward beta-hydroxyamino acids, producing glycine and aldehydes, via a retro-aldol mechanism. In Vibrio vulnificus (strain YJ016), this protein is Serine hydroxymethyltransferase 2.